A 450-amino-acid chain; its full sequence is Involucrin (450 aa).

Polar residues predominate over residues 1–19 (MSQQHTLPVTLPPTLSQEL). Disordered stretches follow at residues 1–43 (MSQQ…LPAP), 77–370 (QLQQ…EQLK), and 422–450 (PGQVQDIQPPQPPKGEVLLPAEQQQEPEV). The segment covering 86–108 (QEVHLAKHQELQELQEQELHLGK) has biased composition (basic and acidic residues). Low complexity predominate over residues 120–135 (GKQQQQQESQEQELYL). Basic and acidic residues-rich tracts occupy residues 187 to 200 (LGKRLEPQEQELHL) and 264 to 281 (QELHLGKRLEPQEQELHL). Over residues 295–344 (GEAAAAGVTGAGPAASKAARRATGAGTAPGKAAAAAGATGAGTAATAPAT) the composition is skewed to low complexity. Over residues 345–370 (AEERQKAESLEQQLEQEKAQREEQLK) the composition is skewed to basic and acidic residues.

Belongs to the involucrin family. In terms of assembly, directly or indirectly cross-linked to cornifelin (CNFN). Substrate of transglutaminase. Specific glutamines or lysines are cross-linked to keratins, desmoplakin and to inter involucrin molecules. Keratinocytes of epidermis and other stratified squamous epithelia.

It is found in the cytoplasm. Part of the insoluble cornified cell envelope (CE) of stratified squamous epithelia. In Lemur catta (Ring-tailed lemur), this protein is Involucrin (IVL).